Here is a 302-residue protein sequence, read N- to C-terminus: Oxygen-dependent coproporphyrinogen-III oxidase (302 aa).

Ser94 contacts substrate. Positions 98 and 108 each coordinate a divalent metal cation. His108 acts as the Proton donor in catalysis. 110 to 112 contacts substrate; the sequence is NVR. A divalent metal cation is bound by residues His147 and His177. The segment at 242-277 is important for dimerization; that stretch reads YVEFNLVFDRGTLFGLQSGGRAESILMSMPPVANWR. 260-262 contacts substrate; the sequence is GGR.

Belongs to the aerobic coproporphyrinogen-III oxidase family. In terms of assembly, homodimer. The cofactor is a divalent metal cation.

The protein localises to the cytoplasm. It catalyses the reaction coproporphyrinogen III + O2 + 2 H(+) = protoporphyrinogen IX + 2 CO2 + 2 H2O. It participates in porphyrin-containing compound metabolism; protoporphyrin-IX biosynthesis; protoporphyrinogen-IX from coproporphyrinogen-III (O2 route): step 1/1. Functionally, involved in the heme biosynthesis. Catalyzes the aerobic oxidative decarboxylation of propionate groups of rings A and B of coproporphyrinogen-III to yield the vinyl groups in protoporphyrinogen-IX. This is Oxygen-dependent coproporphyrinogen-III oxidase from Ralstonia pickettii (strain 12J).